Consider the following 948-residue polypeptide: Receptor-like protein 45 (948 aa).

The N-terminal stretch at 1–26 (MSSSKLMDFGLTWIIMMMILLQGCRS) is a signal peptide. Residues 27–897 (CIESERQGLL…EDDDESGLLD (871 aa)) are Extracellular-facing. 2 N-linked (GlcNAc...) asparagine glycosylation sites follow: asparagine 99 and asparagine 113. 2 LRR repeats span residues 106-129 (FEEL…RKGG) and 135-162 (LRNL…AVSL). One copy of the LRR 3; degenerate repeat lies at 163-183 (KTLILHDNLFKGGFPVQELIN). N-linked (GlcNAc...) asparagine glycosylation is present at asparagine 183. LRR repeat units follow at residues 184–208 (LTSL…ELTN), 210–233 (RNLR…GICR), 234–257 (LEQL…CFSR), 258–284 (FSKL…DFKS), 286–306 (EYLS…LITE), 307–332 (LTEL…VSGG), 334–357 (QSQL…LWYQ), 358–381 (QELR…LLEN), 382–404 (NTEL…PRTM), 405–429 (RRLQ…GLIL), 430–453 (ASLR…MARM), 454–477 (ENIE…LFTG), 479–502 (YSLS…SSDE), 503–526 (TSLI…LLNL), 527–549 (RMLS…WLGN), 550–573 (FFLE…LFNI), 575–595 (YLWL…LRSS), 596–618 (SDYG…DTLW), 619–640 (YGLR…LFRS), 642–665 (PSIS…LCGL), 666–689 (SNVR…VTNL), 758–782 (LNQM…LGDL), 783–805 (KRVR…SFSN), 807–831 (RSIE…TLLQ), and 833–855 (LVVF…QFNT). The N-linked (GlcNAc...) asparagine glycan is linked to asparagine 328. N-linked (GlcNAc...) asparagine glycans are attached at residues asparagine 381 and asparagine 392. 2 N-linked (GlcNAc...) asparagine glycosylation sites follow: asparagine 436 and asparagine 465. The N-linked (GlcNAc...) asparagine glycan is linked to asparagine 608. Asparagine 653, asparagine 679, and asparagine 688 each carry an N-linked (GlcNAc...) asparagine glycan. Asparagine 789 is a glycosylation site (N-linked (GlcNAc...) asparagine). N-linked (GlcNAc...) asparagine glycosylation is found at asparagine 837 and asparagine 842. Residues 898–918 (IVVLWWSLGTTYVTVMMGFLV) form a helical membrane-spanning segment. At 919–948 (FLCFDSPWRRAWFCLVDTFIDRVKDVLGVI) the chain is on the cytoplasmic side.

The protein belongs to the RLP family.

Its subcellular location is the cell membrane. In Arabidopsis thaliana (Mouse-ear cress), this protein is Receptor-like protein 45.